Reading from the N-terminus, the 804-residue chain is G-type lectin S-receptor-like serine/threonine-protein kinase At1g61490 (804 aa).

Positions 1–24 (MGKKRIVFFACLLLFTVLLRFSYA) are cleaved as a signal peptide. In terms of domain architecture, Bulb-type lectin spans 25–144 (GITTESPLSV…ASGRTLWESF (120 aa)). The Extracellular segment spans residues 25 to 425 (GITTESPLSV…SELGGNKRNK (401 aa)). N-linked (GlcNAc...) asparagine glycosylation is found at N53, N94, N117, N134, N236, and N267. The EGF-like domain maps to 278 to 314 (PANSCDIYGVCGPFGLCIVSVPLKCKCLKGFVPHSTE). 2 cysteine pairs are disulfide-bonded: C282–C294 and C288–C302. N320, N336, and N375 each carry an N-linked (GlcNAc...) asparagine glycan. A PAN domain is found at 333 to 415 (CQGNSTGKDV…GEILSIRLAH (83 aa)). 2 cysteine pairs are disulfide-bonded: C368–C389 and C372–C378. The chain crosses the membrane as a helical span at residues 426–446 (IIVASTVSLSLFVILTSAAFG). The Cytoplasmic portion of the chain corresponds to 447-804 (FWRYRVKHKA…EMTQSMILGR (358 aa)). A Protein kinase domain is found at 490–775 (FSLSNKLGQG…DLPSPKQPTF (286 aa)). ATP-binding positions include 496–504 (LGQGGFGSV) and K518. A phosphoserine mark is found at S524 and S539. Residues 579–596 (RKKLEVDWPKRFDIVQGI) are caM-binding. Residue D615 is the Proton acceptor of the active site. S619 and S632 each carry phosphoserine. Residue T649 is modified to Phosphothreonine. S692 is modified (phosphoserine).

It belongs to the protein kinase superfamily. Ser/Thr protein kinase family.

The protein localises to the cell membrane. The catalysed reaction is L-seryl-[protein] + ATP = O-phospho-L-seryl-[protein] + ADP + H(+). It catalyses the reaction L-threonyl-[protein] + ATP = O-phospho-L-threonyl-[protein] + ADP + H(+). In Arabidopsis thaliana (Mouse-ear cress), this protein is G-type lectin S-receptor-like serine/threonine-protein kinase At1g61490.